The chain runs to 837 residues: Toll-like receptor 4 (837 aa).

The signal sequence occupies residues 1–23 (MMSASRLAGTLIPAMAFLSCVRP). Residues 24–629 (ESWEPCVVPN…SLNITCQMNK (606 aa)) are Extracellular-facing. Cys-29 and Cys-38 form a disulfide bridge. Residue Asn-33 is glycosylated (N-linked (GlcNAc...) asparagine). LRR repeat units lie at residues 53 to 74 (STKNLDLSFNPLRHLGSYSFFS), 77 to 98 (ELQVLDLSRCEIQTIEDGAYQS), 101 to 122 (HLSTLILTGNPIQSLALGAFSG), 125 to 146 (SLQKLVAVETNLASLENFPIGH), and 149 to 170 (TLKELNVAHNLIQSFKLPEYFS). Asn-171 carries N-linked (GlcNAc...) asparagine glycosylation. LRR repeat units follow at residues 174–197 (NLEYLDLSSNKIQSIYCTDLRVLH), 203–223 (NLSLDLSLNPMTFIQPGAFKE), and 225–245 (RLHKLTLRNNFDSLNVMKTCI). N-linked (GlcNAc...) asparagine glycosylation occurs at Asn-203. The cysteines at positions 279 and 304 are disulfide-linked. Asn-280 and Asn-307 each carry an N-linked (GlcNAc...) asparagine glycan. LRR repeat units lie at residues 329–349 (GWQHLELVNCKFGQFPTLKLK), 350–371 (SLKRLTFTSNKGGNAFSEVDLP), 372–392 (SLEFLDLSRNGLSFKGCCSQS), 398–420 (SLKYLDLSFNGVITMSSNFLGLE), 421–442 (QLEHLDFQHSNLKQMSEFSVFL), 446–454 (NLIYLDISH), 470–493 (SLEVLKMAGNSFQENFLPDIFTEL), 495–516 (NLTFLDLSQCQLEQLSPTAFNS), 519–540 (SLQVLNMSHNNFFSLDTFPYKC), and 543–563 (SLRVLDYSLNHIMTSKKQELQ). A disulfide bridge links Cys-388 with Cys-389. Asn-495 and Asn-524 each carry an N-linked (GlcNAc...) asparagine glycan. A glycan (N-linked (GlcNAc...) asparagine) is linked at Asn-573. The region spanning 577-627 (NDFACTCEHQSFLQWIKDQRQLLVEVERMECATPSDKQGMPVLSLNITCQM) is the LRRCT domain. 2 cysteine pairs are disulfide-bonded: Cys-581–Cys-607 and Cys-583–Cys-625. Residues Asn-622 and Asn-628 are each glycosylated (N-linked (GlcNAc...) asparagine). Residues 630–650 (TIIGVSVLSVLVVSVVAVLVY) traverse the membrane as a helical segment. Over 651-837 (KFYFHLMLLA…GCNWQEATSI (187 aa)) the chain is Cytoplasmic. The region spanning 670-813 (NVYDAFVIYS…IFWRRLRKAL (144 aa)) is the TIR domain.

Belongs to the Toll-like receptor family. As to quaternary structure, belongs to the lipopolysaccharide (LPS) receptor, a multi-protein complex containing at least CD14, LY96 and TLR4. Binding to bacterial LPS leads to homodimerization. Interacts with LY96 via the extracellular domain. Interacts with MYD88 and TIRAP via their respective TIR domains. Interacts with TICAM2. Interacts with NOX4. Interacts with CNPY3 and HSP90B1; this interaction is required for proper folding in the endoplasmic reticulum. Interacts with MAP3K21; this interaction leads to negative regulation of TLR4 signaling. Interacts with CD36, following CD36 stimulation by oxLDL or amyloid-beta 42, and forms a heterodimer with TLR6. The trimeric complex is internalized and triggers inflammatory response. LYN kinase activity facilitates TLR4-TLR6 heterodimerization and signal initiation. Interacts with TICAM1 in response to LPS in a WDFY1-dependent manner. Interacts with WDFY1 in response to LPS. Interacts with SMPDL3B. Interacts with CEACAM1; upon lipopolysaccharide stimulation, forms a complex including TLR4 and the phosphorylated form of SYK and CEACAM1, which in turn, recruits PTPN6 that dephosphorylates SYK, reducing the production of reactive oxygen species (ROS) and lysosome disruption, which in turn, reduces the activity of the inflammasome. Interacts with RFTN1; the interaction occurs in response to lipopolysaccharide stimulation. Interacts with SCIMP; the interaction occurs in response to lipopolysaccharide stimulation and is enhanced by phosphorylation of SCIMP by LYN. This interaction facilitates the phosphorylation of TLR4 by LYN which elicits a selective cytokine response in macrophages. Interacts with TRAF3IP3. Interacts with TREM1; this interaction enhances TLR4-mediated inflammatory response. Interacts with ZG16B/PAUF. Interacts with CD82; this interaction inhibits TLR4-mediated signaling pathway. Phosphorylated on tyrosine residues by LYN after binding lipopolysaccharide. In terms of processing, ubiquitinated by RNF128 via 'Lys-28'-linked polyubiquitin chains, leading to proteasomal degradation.

The protein resides in the cell membrane. Its subcellular location is the early endosome. It localises to the cell projection. It is found in the ruffle. Transmembrane receptor that functions as a pattern recognition receptor recognizing pathogen- and damage-associated molecular patterns (PAMPs and DAMPs) to induce innate immune responses via downstream signaling pathways. At the plasma membrane, cooperates with LY96 to mediate the innate immune response to bacterial lipopolysaccharide (LPS). Also involved in LPS-independent inflammatory responses triggered by free fatty acids, such as palmitate, and Ni(2+). Mechanistically, acts via MYD88, TIRAP and TRAF6, leading to NF-kappa-B activation, cytokine secretion and the inflammatory response. Alternatively, CD14-mediated TLR4 internalization via endocytosis is associated with the initiation of a MYD88-independent signaling via the TICAM1-TBK1-IRF3 axis leading to type I interferon production. In addition to the secretion of proinflammatory cytokines, initiates the activation of NLRP3 inflammasome and formation of a positive feedback loop between autophagy and NF-kappa-B signaling cascade. In complex with TLR6, promotes inflammation in monocytes/macrophages by associating with TLR6 and the receptor CD86. Upon ligand binding, such as oxLDL or amyloid-beta 42, the TLR4:TLR6 complex is internalized and triggers inflammatory response, leading to NF-kappa-B-dependent production of CXCL1, CXCL2 and CCL9 cytokines, via MYD88 signaling pathway, and CCL5 cytokine, via TICAM1 signaling pathway. In myeloid dendritic cells, vesicular stomatitis virus glycoprotein G but not LPS promotes the activation of IRF7, leading to type I IFN production in a CD14-dependent manner. The chain is Toll-like receptor 4 (TLR4) from Gorilla gorilla gorilla (Western lowland gorilla).